Consider the following 32-residue polypeptide: uncharacterized protein (32 aa).

This is an uncharacterized protein from Schizosaccharomyces pombe (strain 972 / ATCC 24843) (Fission yeast).